The chain runs to 152 residues: Catabolic 3-dehydroquinase 1 (152 aa).

The active-site Proton acceptor is tyrosine 24. Asparagine 75, histidine 81, and aspartate 88 together coordinate substrate. The active-site Proton donor is the histidine 101. Substrate-binding positions include 102–103 (VS) and arginine 112.

This sequence belongs to the type-II 3-dehydroquinase family. In terms of assembly, homododecamer. Adopts a ring-like structure, composed of an arrangement of two hexameric rings stacked on top of one another.

The catalysed reaction is 3-dehydroquinate = 3-dehydroshikimate + H2O. The protein operates within aromatic compound metabolism; 3,4-dihydroxybenzoate biosynthesis; 3,4-dihydroxybenzoate from 3-dehydroquinate: step 1/2. Its function is as follows. Is involved in the catabolism of quinate. Allows the utilization of quinate as carbon source via the beta-ketoadipate pathway. The polypeptide is Catabolic 3-dehydroquinase 1 (Aspergillus terreus (strain NIH 2624 / FGSC A1156)).